Reading from the N-terminus, the 321-residue chain is MAPAFLLLLLLWPQGCVSGPSADSVYTKVRLLEGETLSVQCSYKGYKNRVEGKVWCKIRKKKCEPGFARVWVKGPRYLLQDDAQAKVVNITMVALKLQDSGRYWCMRNTSGILYPLMGFQLDVSPAPQTERNIPFTHLDNILKSGTVTTGQAPTSGPDAPFTTGVMVFTPGLITLPRLLASTRPASKTGYSFTATSTTSQGPRRTMGSQTVTASPSNARDSSAGPESISTKSGDLSTRSPTTGLCLTSRSLLNRLPSMPSIRHQDVYSTVLGVVLTLLVLMLIMVYGFWKKRHMASYSMCSDPSTRDPPGRPEPYVEVYLI.

The signal sequence occupies residues M1 to S18. The Extracellular segment spans residues G19–S268. The Ig-like V-type domain maps to P20 to L121. Disulfide bonds link C41–C105 and C56–C63. N89 carries an N-linked (GlcNAc...) asparagine glycan. 2 stretches are compositionally biased toward polar residues: residues G189–D220 and S227–T241. Positions G189–T241 are disordered. The chain crosses the membrane as a helical span at residues T269–W289. Residues K290–I321 are Cytoplasmic-facing.

As to quaternary structure, interacts with CD276 and this interaction enhances T-cell activation. In terms of tissue distribution, detected in cultured B-cells, T-cell leukemia and monocyte leukemia. Expressed constitutively on CD8 T-cells and induced on CD4 T-cells after activation.

Its subcellular location is the cell membrane. Its function is as follows. Cell surface receptor that may play a role in the innate and adaptive immune response. Acts as a counter-receptor for CD276 and interaction with CD276 on T-cells enhances T-cell activation. This Homo sapiens (Human) protein is Trem-like transcript 2 protein (TREML2).